A 93-amino-acid chain; its full sequence is Small ribosomal subunit protein uS19 (93 aa).

Belongs to the universal ribosomal protein uS19 family.

Functionally, protein S19 forms a complex with S13 that binds strongly to the 16S ribosomal RNA. In Rubrobacter xylanophilus (strain DSM 9941 / JCM 11954 / NBRC 16129 / PRD-1), this protein is Small ribosomal subunit protein uS19.